A 160-amino-acid polypeptide reads, in one-letter code: Allophycocyanin alpha chain (160 aa).

Asn-70 carries the post-translational modification N4-methylasparagine. A (2R,3E)-phycocyanobilin-binding site is contributed by Cys-80.

It belongs to the phycobiliprotein family. Component of the phycobilisome. Heterodimer of an alpha and a beta chain. Post-translationally, contains one covalently linked phycocyanobilin chromophore.

The protein localises to the cellular thylakoid membrane. Light-harvesting photosynthetic bile pigment-protein from the phycobiliprotein complex. Allophycocyanin has a maximum absorption at approximately 650 nanometers. In Anabaena cylindrica, this protein is Allophycocyanin alpha chain (apcA).